The chain runs to 321 residues: D-alanine--D-alanine ligase (321 aa).

The region spanning 121 to 315 (RSWFLTNNIN…FTNLIEEIIK (195 aa)) is the ATP-grasp domain. Residue 147–199 (PMKRPYVIKPLTQGSSIGVEVIFAEDNFNFADYDFPYGDQVIIEQYIKGRELQ) coordinates ATP. Glu268, Glu282, and Asn284 together coordinate Mg(2+).

Belongs to the D-alanine--D-alanine ligase family. Requires Mg(2+) as cofactor. Mn(2+) serves as cofactor.

It localises to the cytoplasm. It catalyses the reaction 2 D-alanine + ATP = D-alanyl-D-alanine + ADP + phosphate + H(+). It functions in the pathway cell wall biogenesis; peptidoglycan biosynthesis. In terms of biological role, cell wall formation. The protein is D-alanine--D-alanine ligase of Rickettsia massiliae (strain Mtu5).